Reading from the N-terminus, the 569-residue chain is Sulfite reductase [NADPH] hemoprotein beta-component (569 aa).

Residues C434, C440, C479, and C483 each contribute to the [4Fe-4S] cluster site. C483 provides a ligand contact to siroheme.

The protein belongs to the nitrite and sulfite reductase 4Fe-4S domain family. As to quaternary structure, alpha(8)-beta(8). The alpha component is a flavoprotein, the beta component is a hemoprotein. Siroheme is required as a cofactor. [4Fe-4S] cluster serves as cofactor.

It catalyses the reaction hydrogen sulfide + 3 NADP(+) + 3 H2O = sulfite + 3 NADPH + 4 H(+). It functions in the pathway sulfur metabolism; hydrogen sulfide biosynthesis; hydrogen sulfide from sulfite (NADPH route): step 1/1. Component of the sulfite reductase complex that catalyzes the 6-electron reduction of sulfite to sulfide. This is one of several activities required for the biosynthesis of L-cysteine from sulfate. This chain is Sulfite reductase [NADPH] hemoprotein beta-component, found in Staphylococcus saprophyticus subsp. saprophyticus (strain ATCC 15305 / DSM 20229 / NCIMB 8711 / NCTC 7292 / S-41).